The sequence spans 175 residues: Peptidyl-prolyl cis-trans isomerase B (175 aa).

Residues 3-172 form the PPIase cyclophilin-type domain; it reads EQLYATLKTN…EDVVIESVVV (170 aa).

Belongs to the cyclophilin-type PPIase family.

It localises to the cytoplasm. The catalysed reaction is [protein]-peptidylproline (omega=180) = [protein]-peptidylproline (omega=0). Its activity is regulated as follows. Inhibited by cyclosporin A (CsA). Functionally, PPIases accelerate the folding of proteins. It catalyzes the cis-trans isomerization of proline imidic peptide bonds in oligopeptides. This chain is Peptidyl-prolyl cis-trans isomerase B (cypB), found in Streptomyces anulatus (Streptomyces chrysomallus).